A 162-amino-acid chain; its full sequence is UPF0305 protein MmarC5_0909 (162 aa).

Belongs to the UPF0305 family.

This is UPF0305 protein MmarC5_0909 from Methanococcus maripaludis (strain C5 / ATCC BAA-1333).